The primary structure comprises 251 residues: Ubiquinone/menaquinone biosynthesis C-methyltransferase UbiE (251 aa).

Residues T74, D95, N123–A124, and S140 each bind S-adenosyl-L-methionine.

This sequence belongs to the class I-like SAM-binding methyltransferase superfamily. MenG/UbiE family.

The catalysed reaction is a 2-demethylmenaquinol + S-adenosyl-L-methionine = a menaquinol + S-adenosyl-L-homocysteine + H(+). It carries out the reaction a 2-methoxy-6-(all-trans-polyprenyl)benzene-1,4-diol + S-adenosyl-L-methionine = a 5-methoxy-2-methyl-3-(all-trans-polyprenyl)benzene-1,4-diol + S-adenosyl-L-homocysteine + H(+). Its pathway is quinol/quinone metabolism; menaquinone biosynthesis; menaquinol from 1,4-dihydroxy-2-naphthoate: step 2/2. The protein operates within cofactor biosynthesis; ubiquinone biosynthesis. Functionally, methyltransferase required for the conversion of demethylmenaquinol (DMKH2) to menaquinol (MKH2) and the conversion of 2-polyprenyl-6-methoxy-1,4-benzoquinol (DDMQH2) to 2-polyprenyl-3-methyl-6-methoxy-1,4-benzoquinol (DMQH2). The polypeptide is Ubiquinone/menaquinone biosynthesis C-methyltransferase UbiE (Citrobacter koseri (strain ATCC BAA-895 / CDC 4225-83 / SGSC4696)).